Reading from the N-terminus, the 108-residue chain is Trp operon repressor homolog (108 aa).

Residues 59-82 mediate DNA binding; sequence QRQISQLLGVGVATITRGSNELKS.

It belongs to the TrpR family. As to quaternary structure, homodimer.

The protein resides in the cytoplasm. Functionally, this protein is an aporepressor. When complexed with L-tryptophan it binds the operator region of the trp operon and prevents the initiation of transcription. This Aliivibrio fischeri (strain MJ11) (Vibrio fischeri) protein is Trp operon repressor homolog.